Reading from the N-terminus, the 326-residue chain is Tagatose 1,6-diphosphate aldolase (326 aa).

The protein belongs to the aldolase LacD family.

It carries out the reaction D-tagatofuranose 1,6-bisphosphate = D-glyceraldehyde 3-phosphate + dihydroxyacetone phosphate. The protein operates within carbohydrate metabolism; D-tagatose 6-phosphate degradation; D-glyceraldehyde 3-phosphate and glycerone phosphate from D-tagatose 6-phosphate: step 2/2. In Streptococcus pneumoniae serotype 4 (strain ATCC BAA-334 / TIGR4), this protein is Tagatose 1,6-diphosphate aldolase.